The following is a 161-amino-acid chain: Cyclic pyranopterin monophosphate synthase (161 aa).

Substrate contacts are provided by residues 76–78 (MCH) and 114–115 (ME). The active site involves D129.

It belongs to the MoaC family. In terms of assembly, homohexamer; trimer of dimers.

The enzyme catalyses (8S)-3',8-cyclo-7,8-dihydroguanosine 5'-triphosphate = cyclic pyranopterin phosphate + diphosphate. Its pathway is cofactor biosynthesis; molybdopterin biosynthesis. In terms of biological role, catalyzes the conversion of (8S)-3',8-cyclo-7,8-dihydroguanosine 5'-triphosphate to cyclic pyranopterin monophosphate (cPMP). The chain is Cyclic pyranopterin monophosphate synthase from Clostridium acetobutylicum (strain ATCC 824 / DSM 792 / JCM 1419 / IAM 19013 / LMG 5710 / NBRC 13948 / NRRL B-527 / VKM B-1787 / 2291 / W).